We begin with the raw amino-acid sequence, 610 residues long: Elongation factor 4 (610 aa).

The tr-type G domain maps to Ser13 to Lys195. GTP contacts are provided by residues Asp25–Thr30 and Asn142–Asp145.

The protein belongs to the TRAFAC class translation factor GTPase superfamily. Classic translation factor GTPase family. LepA subfamily.

The protein localises to the cell inner membrane. It catalyses the reaction GTP + H2O = GDP + phosphate + H(+). Functionally, required for accurate and efficient protein synthesis under certain stress conditions. May act as a fidelity factor of the translation reaction, by catalyzing a one-codon backward translocation of tRNAs on improperly translocated ribosomes. Back-translocation proceeds from a post-translocation (POST) complex to a pre-translocation (PRE) complex, thus giving elongation factor G a second chance to translocate the tRNAs correctly. Binds to ribosomes in a GTP-dependent manner. This chain is Elongation factor 4, found in Rhizobium leguminosarum bv. trifolii (strain WSM2304).